A 346-amino-acid polypeptide reads, in one-letter code: N-acetyl-gamma-glutamyl-phosphate reductase (346 aa).

Cysteine 150 is a catalytic residue.

The protein belongs to the NAGSA dehydrogenase family. Type 1 subfamily.

The protein resides in the cytoplasm. The catalysed reaction is N-acetyl-L-glutamate 5-semialdehyde + phosphate + NADP(+) = N-acetyl-L-glutamyl 5-phosphate + NADPH + H(+). The protein operates within amino-acid biosynthesis; L-arginine biosynthesis; N(2)-acetyl-L-ornithine from L-glutamate: step 3/4. In terms of biological role, catalyzes the NADPH-dependent reduction of N-acetyl-5-glutamyl phosphate to yield N-acetyl-L-glutamate 5-semialdehyde. In Acetivibrio thermocellus (strain ATCC 27405 / DSM 1237 / JCM 9322 / NBRC 103400 / NCIMB 10682 / NRRL B-4536 / VPI 7372) (Clostridium thermocellum), this protein is N-acetyl-gamma-glutamyl-phosphate reductase.